The following is a 465-amino-acid chain: GTPase Der (465 aa).

EngA-type G domains are found at residues 3–166 (FLVA…LNEY) and 184–358 (IHFS…ACAN). Residues 9-16 (GRANVGKS), 56-60 (DTGGI), 118-121 (NKVD), 190-197 (GRPNVGKS), 237-241 (DTAGV), and 302-305 (NKWD) contribute to the GTP site. Residues 359-443 (KKITTADATR…PIVFEFKQSE (85 aa)) form the KH-like domain. A disordered region spans residues 446-465 (FADRKNKRSKDEGSKSKKVK).

It belongs to the TRAFAC class TrmE-Era-EngA-EngB-Septin-like GTPase superfamily. EngA (Der) GTPase family. In terms of assembly, associates with the 50S ribosomal subunit.

In terms of biological role, GTPase that plays an essential role in the late steps of ribosome biogenesis. In Francisella tularensis subsp. holarctica (strain FTNF002-00 / FTA), this protein is GTPase Der.